A 107-amino-acid polypeptide reads, in one-letter code: Iron-sulfur cluster assembly protein CyaY (107 aa).

Belongs to the frataxin family.

In terms of biological role, involved in iron-sulfur (Fe-S) cluster assembly. May act as a regulator of Fe-S biogenesis. The sequence is that of Iron-sulfur cluster assembly protein CyaY from Neisseria meningitidis serogroup A / serotype 4A (strain DSM 15465 / Z2491).